The primary structure comprises 210 residues: dITP/XTP pyrophosphatase (210 aa).

13–18 contacts substrate; that stretch reads THNPGK. Mg(2+) is bound by residues D45 and D74. Residue D74 is the Proton acceptor of the active site. Residues S75, 160 to 163, K183, and 195 to 196 each bind substrate; these read FGYD and HR.

Belongs to the HAM1 NTPase family. In terms of assembly, homodimer. It depends on Mg(2+) as a cofactor.

The catalysed reaction is XTP + H2O = XMP + diphosphate + H(+). It carries out the reaction dITP + H2O = dIMP + diphosphate + H(+). It catalyses the reaction ITP + H2O = IMP + diphosphate + H(+). In terms of biological role, pyrophosphatase that catalyzes the hydrolysis of nucleoside triphosphates to their monophosphate derivatives, with a high preference for the non-canonical purine nucleotides XTP (xanthosine triphosphate), dITP (deoxyinosine triphosphate) and ITP. Seems to function as a house-cleaning enzyme that removes non-canonical purine nucleotides from the nucleotide pool, thus preventing their incorporation into DNA/RNA and avoiding chromosomal lesions. The protein is dITP/XTP pyrophosphatase of Rhodopseudomonas palustris (strain ATCC BAA-98 / CGA009).